We begin with the raw amino-acid sequence, 688 residues long: NADPH-dependent diflavin oxidoreductase 1 (688 aa).

The disordered stretch occupies residues 26-76 (HLHRHADTSPTNQHNTSHKMTTTEPIHVTTGSGESRDHTEPRHVTPTSPNA). The segment covering 33–58 (TSPTNQHNTSHKMTTTEPIHVTTGSG) has biased composition (polar residues). Over residues 59-68 (ESRDHTEPRH) the composition is skewed to basic and acidic residues. The 146-residue stretch at 82-227 (ITIAYATETG…MYNEWQARFC (146 aa)) folds into the Flavodoxin-like domain. Residues 88–93 (TETGNA), 136–139 (STTG), 174–183 (LGDSSYPRFN), and Asp209 contribute to the FMN site. The FAD-binding FR-type domain maps to 277-543 (KDVLQGTVVG…KHSTPIPDLD (267 aa)). FAD-binding positions include Arg453, 483-486 (RLFS), and 515-518 (GVLT). NADP(+) contacts are provided by residues Thr554, 607 to 608 (SR), and 613 to 617 (GGYVQ). Trp688 provides a ligand contact to FAD.

It belongs to the NADPH-dependent diflavin oxidoreductase NDOR1 family. In the N-terminal section; belongs to the flavodoxin family. The protein in the C-terminal section; belongs to the flavoprotein pyridine nucleotide cytochrome reductase family. In terms of assembly, interacts with DRE2; as part of the cytosolic iron-sulfur (Fe-S) protein assembly (CIA) machinery. Requires FAD as cofactor. FMN is required as a cofactor.

It localises to the cytoplasm. Its subcellular location is the mitochondrion. It catalyses the reaction 2 oxidized [2Fe-2S]-[protein] + NADPH = 2 reduced [2Fe-2S]-[protein] + NADP(+) + H(+). Functionally, NADPH-dependent reductase which is a central component of the cytosolic iron-sulfur (Fe-S) protein assembly (CIA) machinery. Transfers electrons from NADPH via its FAD and FMN prosthetic groups to the [2Fe-2S] cluster of DRE2, another key component of the CIA machinery. In turn, this reduced cluster provides electrons for assembly of cytosolic iron-sulfur cluster proteins. Positively controls H(2)O(2)-induced cell death. This chain is NADPH-dependent diflavin oxidoreductase 1, found in Yarrowia lipolytica (strain CLIB 122 / E 150) (Yeast).